The following is a 523-amino-acid chain: Putative L-type lectin-domain containing receptor kinase V.6 (523 aa).

Residues 1 to 27 form the signal peptide; it reads MFSEVKVLQIVLVQWLTLFSFTYNSHG. The interval 28–242 is legume-lectin like; the sequence is TYILDGSAVF…TGSIRALHYM (215 aa). Residues 28–279 lie on the Extracellular side of the membrane; sequence TYILDGSAVF…KPSDRLRTVL (252 aa). N-linked (GlcNAc...) asparagine glycans are attached at residues asparagine 47, asparagine 59, asparagine 112, and asparagine 171. The chain crosses the membrane as a helical span at residues 280 to 300; that stretch reads AVCLTLALFAVFLASGIGFVF. Residues 301-523 are Cytoplasmic-facing; the sequence is YLRHKKVKEV…TGRAVRVKFF (223 aa). The 189-residue stretch at 335 to 523 folds into the Protein kinase domain; that stretch reads FKEKQLLGKG…TGRAVRVKFF (189 aa). Residues 341-349 and lysine 364 contribute to the ATP site; that span reads LGKGGFGQV. Aspartate 464 serves as the catalytic Proton acceptor.

It in the C-terminal section; belongs to the protein kinase superfamily. Ser/Thr protein kinase family. This sequence in the N-terminal section; belongs to the leguminous lectin family.

It is found in the cell membrane. The catalysed reaction is L-seryl-[protein] + ATP = O-phospho-L-seryl-[protein] + ADP + H(+). The enzyme catalyses L-threonyl-[protein] + ATP = O-phospho-L-threonyl-[protein] + ADP + H(+). This is Putative L-type lectin-domain containing receptor kinase V.6 (LECRK56) from Arabidopsis thaliana (Mouse-ear cress).